Reading from the N-terminus, the 337-residue chain is Quinolinate synthase (337 aa).

The iminosuccinate site is built by histidine 40 and serine 57. Cysteine 102 provides a ligand contact to [4Fe-4S] cluster. Residues 128-130 (YVN) and serine 145 each bind iminosuccinate. [4Fe-4S] cluster is bound at residue cysteine 189. Iminosuccinate contacts are provided by residues 215–217 (HPE) and threonine 243. Cysteine 288 contacts [4Fe-4S] cluster.

This sequence belongs to the quinolinate synthase family. Type 2 subfamily. It depends on [4Fe-4S] cluster as a cofactor.

The protein localises to the cytoplasm. It carries out the reaction iminosuccinate + dihydroxyacetone phosphate = quinolinate + phosphate + 2 H2O + H(+). It functions in the pathway cofactor biosynthesis; NAD(+) biosynthesis; quinolinate from iminoaspartate: step 1/1. Its function is as follows. Catalyzes the condensation of iminoaspartate with dihydroxyacetone phosphate to form quinolinate. The polypeptide is Quinolinate synthase (Mycobacterium sp. (strain JLS)).